Here is a 260-residue protein sequence, read N- to C-terminus: NH(3)-dependent NAD(+) synthetase (260 aa).

31–38 provides a ligand contact to ATP; it reads GLSGGLDS. Mg(2+) is bound at residue D37. R112 contacts deamido-NAD(+). T132 is an ATP binding site. E137 is a Mg(2+) binding site. The ATP site is built by K161 and S183.

It belongs to the NAD synthetase family. In terms of assembly, homodimer.

The catalysed reaction is deamido-NAD(+) + NH4(+) + ATP = AMP + diphosphate + NAD(+) + H(+). It functions in the pathway cofactor biosynthesis; NAD(+) biosynthesis; NAD(+) from deamido-NAD(+) (ammonia route): step 1/1. Functionally, catalyzes the ATP-dependent amidation of deamido-NAD to form NAD. Uses ammonia as a nitrogen source. In Helicobacter pylori (strain P12), this protein is NH(3)-dependent NAD(+) synthetase.